A 384-amino-acid polypeptide reads, in one-letter code: Troponin T (384 aa).

A compositionally biased stretch (acidic residues) spans Met-1–Pro-15. 4 disordered regions span residues Met-1–Ser-23, Arg-61–Leu-169, Leu-237–Pro-257, and Pro-313–Glu-384. Basic and acidic residues-rich tracts occupy residues Arg-61–Lys-74 and Met-81–Arg-126. The segment covering Phe-316–Pro-327 has biased composition (basic and acidic residues). Residues Glu-328–Glu-384 show a composition bias toward acidic residues.

The protein belongs to the troponin T family.

Its function is as follows. Troponin T is the tropomyosin-binding subunit of troponin, the thin filament regulatory complex which confers calcium-sensitivity to striated muscle actomyosin ATPase activity. This Periplaneta americana (American cockroach) protein is Troponin T (TNT).